The sequence spans 380 residues: Queuine tRNA-ribosyltransferase (380 aa).

D89 acts as the Proton acceptor in catalysis. Residues 89-93 (DSGGF), D143, Q187, and G214 each bind substrate. The segment at 245-251 (GVGKPED) is RNA binding. D264 serves as the catalytic Nucleophile. An RNA binding; important for wobble base 34 recognition region spans residues 269 to 273 (TRNAR). The Zn(2+) site is built by C302, C304, C307, and H333.

This sequence belongs to the queuine tRNA-ribosyltransferase family. Homodimer. Within each dimer, one monomer is responsible for RNA recognition and catalysis, while the other monomer binds to the replacement base PreQ1. The cofactor is Zn(2+).

The catalysed reaction is 7-aminomethyl-7-carbaguanine + guanosine(34) in tRNA = 7-aminomethyl-7-carbaguanosine(34) in tRNA + guanine. Its pathway is tRNA modification; tRNA-queuosine biosynthesis. In terms of biological role, catalyzes the base-exchange of a guanine (G) residue with the queuine precursor 7-aminomethyl-7-deazaguanine (PreQ1) at position 34 (anticodon wobble position) in tRNAs with GU(N) anticodons (tRNA-Asp, -Asn, -His and -Tyr). Catalysis occurs through a double-displacement mechanism. The nucleophile active site attacks the C1' of nucleotide 34 to detach the guanine base from the RNA, forming a covalent enzyme-RNA intermediate. The proton acceptor active site deprotonates the incoming PreQ1, allowing a nucleophilic attack on the C1' of the ribose to form the product. After dissociation, two additional enzymatic reactions on the tRNA convert PreQ1 to queuine (Q), resulting in the hypermodified nucleoside queuosine (7-(((4,5-cis-dihydroxy-2-cyclopenten-1-yl)amino)methyl)-7-deazaguanosine). In Proteus mirabilis (strain HI4320), this protein is Queuine tRNA-ribosyltransferase.